A 137-amino-acid polypeptide reads, in one-letter code: Small ribosomal subunit protein bS6 (137 aa).

Positions 96–137 are disordered; sequence ITEASPMAKAKDERDTRRSSEERAPRAEATEEAEESAENTAE. Positions 104–124 are enriched in basic and acidic residues; sequence KAKDERDTRRSSEERAPRAEA. A compositionally biased stretch (acidic residues) spans 125–137; the sequence is TEEAEESAENTAE.

Belongs to the bacterial ribosomal protein bS6 family.

Binds together with bS18 to 16S ribosomal RNA. The protein is Small ribosomal subunit protein bS6 of Shewanella pealeana (strain ATCC 700345 / ANG-SQ1).